We begin with the raw amino-acid sequence, 296 residues long: Ribosomal RNA small subunit methyltransferase A (296 aa).

S-adenosyl-L-methionine is bound by residues Asn-30, Leu-32, Gly-57, Glu-78, Asp-103, and Asn-128.

The protein belongs to the class I-like SAM-binding methyltransferase superfamily. rRNA adenine N(6)-methyltransferase family. RsmA subfamily.

It localises to the cytoplasm. The catalysed reaction is adenosine(1518)/adenosine(1519) in 16S rRNA + 4 S-adenosyl-L-methionine = N(6)-dimethyladenosine(1518)/N(6)-dimethyladenosine(1519) in 16S rRNA + 4 S-adenosyl-L-homocysteine + 4 H(+). Its function is as follows. Specifically dimethylates two adjacent adenosines (A1518 and A1519) in the loop of a conserved hairpin near the 3'-end of 16S rRNA in the 30S particle. May play a critical role in biogenesis of 30S subunits. The chain is Ribosomal RNA small subunit methyltransferase A from Macrococcus caseolyticus (strain JCSC5402) (Macrococcoides caseolyticum).